Consider the following 386-residue polypeptide: Succinyl-diaminopimelate desuccinylase (386 aa).

His-73 serves as a coordination point for Zn(2+). The active site involves Asp-75. Asp-106 is a binding site for Zn(2+). The Proton acceptor role is filled by Glu-140. The Zn(2+) site is built by Glu-141, Glu-169, and His-355.

Belongs to the peptidase M20A family. DapE subfamily. Homodimer. It depends on Zn(2+) as a cofactor. Co(2+) serves as cofactor.

It catalyses the reaction N-succinyl-(2S,6S)-2,6-diaminopimelate + H2O = (2S,6S)-2,6-diaminopimelate + succinate. Its pathway is amino-acid biosynthesis; L-lysine biosynthesis via DAP pathway; LL-2,6-diaminopimelate from (S)-tetrahydrodipicolinate (succinylase route): step 3/3. Functionally, catalyzes the hydrolysis of N-succinyl-L,L-diaminopimelic acid (SDAP), forming succinate and LL-2,6-diaminopimelate (DAP), an intermediate involved in the bacterial biosynthesis of lysine and meso-diaminopimelic acid, an essential component of bacterial cell walls. This Delftia acidovorans (strain DSM 14801 / SPH-1) protein is Succinyl-diaminopimelate desuccinylase.